The primary structure comprises 284 residues: Distal membrane arm assembly component 2 (284 aa).

Belongs to the ATP synthase subunit s family. Associates with mitochondrial complex I assembly intermediates during its biogenesis.

Functionally, involved in the assembly of the mitochondrial membrane respiratory chain NADH dehydrogenase (Complex I). The polypeptide is Distal membrane arm assembly component 2 (Drosophila melanogaster (Fruit fly)).